A 58-amino-acid chain; its full sequence is Isocitrate lyase (58 aa).

Belongs to the isocitrate lyase/PEP mutase superfamily. Isocitrate lyase family. In terms of assembly, homotetramer. Mg(2+) serves as cofactor.

The protein resides in the glyoxysome. It catalyses the reaction D-threo-isocitrate = glyoxylate + succinate. It participates in carbohydrate metabolism; glyoxylate cycle; (S)-malate from isocitrate: step 1/2. In terms of biological role, involved in storage lipid mobilization during the growth of higher plant seedling. The polypeptide is Isocitrate lyase (Helianthus annuus (Common sunflower)).